We begin with the raw amino-acid sequence, 282 residues long: MSSSTSAAPVVTIGRVKFGNDLPISIIAGPCQLESRQHALEVASALKEIAARLNIGLVYKTSFDKANRTSASAARGLGLAQSLPIFAEIRSSLGLPVLTDVHEATQCAEVAQAVDILQIPAFLCRQTDLLLAAAATGKVVNVKKGQFLAPWDMANVVTKITSANNPNVLVTERGASFGYNTLVSDMRALPILARTTGAPVIFDATHSVQQPGGKGTSSGGEREFVPVLARAAVAVGVAGVFIETHPDPDSAPSDGPNMVPLREFEGLIRRLMAFDALAKNPR.

This sequence belongs to the KdsA family.

The protein resides in the cytoplasm. It carries out the reaction D-arabinose 5-phosphate + phosphoenolpyruvate + H2O = 3-deoxy-alpha-D-manno-2-octulosonate-8-phosphate + phosphate. Its pathway is carbohydrate biosynthesis; 3-deoxy-D-manno-octulosonate biosynthesis; 3-deoxy-D-manno-octulosonate from D-ribulose 5-phosphate: step 2/3. It functions in the pathway bacterial outer membrane biogenesis; lipopolysaccharide biosynthesis. In Bradyrhizobium diazoefficiens (strain JCM 10833 / BCRC 13528 / IAM 13628 / NBRC 14792 / USDA 110), this protein is 2-dehydro-3-deoxyphosphooctonate aldolase.